The following is a 148-amino-acid chain: Macrodomain Ter protein (148 aa).

Belongs to the MatP family. Homodimer.

It is found in the cytoplasm. Required for spatial organization of the terminus region of the chromosome (Ter macrodomain) during the cell cycle. Prevents early segregation of duplicated Ter macrodomains during cell division. Binds specifically to matS, which is a 13 bp signature motif repeated within the Ter macrodomain. This is Macrodomain Ter protein from Haemophilus influenzae (strain 86-028NP).